Consider the following 415-residue polypeptide: NADH-quinone oxidoreductase subunit D (415 aa).

It belongs to the complex I 49 kDa subunit family. In terms of assembly, NDH-1 is composed of 14 different subunits. Subunits NuoB, C, D, E, F, and G constitute the peripheral sector of the complex.

The protein resides in the cell inner membrane. The catalysed reaction is a quinone + NADH + 5 H(+)(in) = a quinol + NAD(+) + 4 H(+)(out). Its function is as follows. NDH-1 shuttles electrons from NADH, via FMN and iron-sulfur (Fe-S) centers, to quinones in the respiratory chain. The immediate electron acceptor for the enzyme in this species is believed to be ubiquinone. Couples the redox reaction to proton translocation (for every two electrons transferred, four hydrogen ions are translocated across the cytoplasmic membrane), and thus conserves the redox energy in a proton gradient. The chain is NADH-quinone oxidoreductase subunit D from Myxococcus xanthus (strain DK1622).